The primary structure comprises 375 residues: MKILVDENMPYADQLFQQLGDVQAIPGRPVPEGVLDHADAFMVRSVTKVNEELLKGRAVKFIGTATAGTDHVDQSWLSQAGIGFSAAPGCNAIAVVEYVFSALMLLAERDNFELKDKVVGIVGVGNVGSRLAERLAVLGIRTLLCDPPRADRGDAGEFWSLEKLVKEADILTFHTPLNKSGPYKTHHLVDVELLSVLPDNRILINASRGEVIDNQALLTALKCGKKLRVVLDVWEPEPDLSLPLLELVDIGTPHIAGYTLEGKARGTTQVFEAYCEFLGQPRKVALSDLLPEPDFSRVTLHGNVTQSTLKRLMHLVYDVRRDDTPLRQVAGQKGQFDYLRKNYLERREWSSLTVCCDNRESAELLAALGFSTELI.

Substrate contacts are provided by S45 and T66. NAD(+)-binding positions include D146, T175, 206-208, and D232; that span reads ASR. The active site involves R208. Residue E237 is part of the active site. The active-site Proton donor is the H254. Position 257 (G257) interacts with NAD(+). Residue Y258 participates in substrate binding.

It belongs to the D-isomer specific 2-hydroxyacid dehydrogenase family. PdxB subfamily. Homodimer.

It is found in the cytoplasm. It carries out the reaction 4-phospho-D-erythronate + NAD(+) = (R)-3-hydroxy-2-oxo-4-phosphooxybutanoate + NADH + H(+). The protein operates within cofactor biosynthesis; pyridoxine 5'-phosphate biosynthesis; pyridoxine 5'-phosphate from D-erythrose 4-phosphate: step 2/5. Its function is as follows. Catalyzes the oxidation of erythronate-4-phosphate to 3-hydroxy-2-oxo-4-phosphonooxybutanoate. The polypeptide is Erythronate-4-phosphate dehydrogenase (Photorhabdus laumondii subsp. laumondii (strain DSM 15139 / CIP 105565 / TT01) (Photorhabdus luminescens subsp. laumondii)).